Reading from the N-terminus, the 1001-residue chain is Sarcoplasmic/endoplasmic reticulum calcium ATPase 1 (1001 aa).

Transmembrane regions (helical) follow at residues 49–69 (LWEL…LLAA), 90–110 (EPFV…WQER), 254–273 (DEFG…AVWL), and 296–313 (FKIA…GLPA). The Ca(2+) site is built by Val-304, Ala-305, Ile-307, and Glu-309. The 4-aspartylphosphate intermediate role is filled by Asp-351. Positions 351 and 353 each coordinate Mg(2+). Thr-353 is a binding site for ATP. Thr-441 is subject to Phosphothreonine. Residues Glu-442, Arg-489, Lys-515, and Arg-560 each coordinate ATP. Thr-569 is subject to Phosphothreonine. Ser-581 bears the Phosphoserine mark. ATP is bound by residues Thr-625, Gly-626, Asp-627, Arg-678, and Lys-684. Asp-703 contacts Mg(2+). Asn-706 is a binding site for ATP. 3 helical membrane-spanning segments follow: residues 758-777 (KQFI…CIFL), 788-808 (IPVQ…TALG), and 829-851 (ISGW…TVGA). 5 residues coordinate Ca(2+): Asn-768, Glu-771, Asn-796, Thr-799, and Asp-800. The interval 788–808 (IPVQLLWVNLVTDGLPATALG) is interaction with PLN. A disulfide bridge links Cys-876 with Cys-888. 3 consecutive transmembrane segments (helical) span residues 898–917 (TMAL…NSLS), 931–949 (IWLL…LILY), and 965–985 (TQWL…EILK). A Ca(2+)-binding site is contributed by Glu-908. Residues 932-943 (WLLGSICLSMSL) form an interaction with PLN region.

It belongs to the cation transport ATPase (P-type) (TC 3.A.3) family. Type IIA subfamily. As to quaternary structure, interacts with sarcolipin (SLN). Interacts with phospholamban (PLN). Interacts with myoregulin (MRLN). Interacts with DWORF. Interacts with VMP1. Mg(2+) serves as cofactor. In terms of tissue distribution, skeletal muscle, fast twitch muscle (type II) fibers.

The protein resides in the endoplasmic reticulum membrane. Its subcellular location is the sarcoplasmic reticulum membrane. The enzyme catalyses Ca(2+)(in) + ATP + H2O = Ca(2+)(out) + ADP + phosphate + H(+). Inhibited by sarcolipin (SLN) and myoregulin (MRLN). Has also been shown to be reversibly inhibited by phospholamban (PLN) at low calcium concentrations in vitro. Dephosphorylated PLN decreases the apparent affinity of the ATPase for calcium and this inhibition is regulated by the phosphorylation of PLN in vitro. Enhanced by DWORF; DWORF increases activity by displacing sarcolipin (SLN), phospholamban (PLN) and myoregulin (MRLN). Its function is as follows. Key regulator of striated muscle performance by acting as the major Ca(2+) ATPase responsible for the reuptake of cytosolic Ca(2+) into the sarcoplasmic reticulum. Catalyzes the hydrolysis of ATP coupled with the translocation of calcium from the cytosol to the sarcoplasmic reticulum lumen. Contributes to calcium sequestration involved in muscular excitation/contraction. The protein is Sarcoplasmic/endoplasmic reticulum calcium ATPase 1 of Homo sapiens (Human).